We begin with the raw amino-acid sequence, 488 residues long: Katanin p60 ATPase-containing subunit A-like 1 (488 aa).

M1 bears the N-acetylmethionine mark. The segment at 95-179 (DPAVWPPPVP…GASDSEIPKF (85 aa)) is disordered. Basic and acidic residues predominate over residues 116–127 (PNREVRPLRKDV). Residues 128 to 138 (GAGARGLVGRA) are compositionally biased toward low complexity. A compositionally biased stretch (basic and acidic residues) spans 142–167 (SKSDKPASRDKDYRARGRDDKARKNV). Residue S172 is modified to Phosphoserine. Residue 246–253 (GPPGTGKT) coordinates ATP.

Belongs to the AAA ATPase family. Katanin p60 subunit A1 subfamily. A-like 1 sub-subfamily. As to quaternary structure, interacts with KATNB1 and KATNBL1. Widely expressed, including in testis, brain, heart, lung, kidney, liver, spleen, seminal vesicles and ovary. In testis, restricted to Sertoli cells within the seminiferous epithelium (at protein level).

The protein resides in the cytoplasm. The protein localises to the cytoskeleton. It localises to the spindle pole. It is found in the spindle. It carries out the reaction n ATP + n H2O + a microtubule = n ADP + n phosphate + (n+1) alpha/beta tubulin heterodimers.. Regulates microtubule dynamics in Sertoli cells, a process that is essential for spermiogenesis and male fertility. Severs microtubules in an ATP-dependent manner, promoting rapid reorganization of cellular microtubule arrays. Has microtubule-severing activity in vitro. The sequence is that of Katanin p60 ATPase-containing subunit A-like 1 (Katnal1) from Mus musculus (Mouse).